Here is a 264-residue protein sequence, read N- to C-terminus: 3-methyl-2-oxobutanoate hydroxymethyltransferase (264 aa).

Residues Asp45 and Asp84 each coordinate Mg(2+). 3-methyl-2-oxobutanoate contacts are provided by residues 45 to 46 (DS), Asp84, and Lys112. Glu114 serves as a coordination point for Mg(2+). Catalysis depends on Glu181, which acts as the Proton acceptor.

Belongs to the PanB family. As to quaternary structure, homodecamer; pentamer of dimers. Requires Mg(2+) as cofactor.

The protein resides in the cytoplasm. It carries out the reaction 3-methyl-2-oxobutanoate + (6R)-5,10-methylene-5,6,7,8-tetrahydrofolate + H2O = 2-dehydropantoate + (6S)-5,6,7,8-tetrahydrofolate. Its pathway is cofactor biosynthesis; (R)-pantothenate biosynthesis; (R)-pantoate from 3-methyl-2-oxobutanoate: step 1/2. Catalyzes the reversible reaction in which hydroxymethyl group from 5,10-methylenetetrahydrofolate is transferred onto alpha-ketoisovalerate to form ketopantoate. This chain is 3-methyl-2-oxobutanoate hydroxymethyltransferase, found in Shewanella loihica (strain ATCC BAA-1088 / PV-4).